Here is a 439-residue protein sequence, read N- to C-terminus: Protein dumpy-20 (439 aa).

The disordered stretch occupies residues 93 to 116; it reads GTLSDPSLHGSNSSSSTSDVGSSV. Over residues 96 to 116 the composition is skewed to low complexity; it reads SDPSLHGSNSSSSTSDVGSSV. BED-type zinc fingers lie at residues 135 to 184 and 349 to 398; these read PTEN…YQKV and KTEH…YNDV. Residues C154, C157, H172, H177, C368, C371, H386, and H391 each coordinate Zn(2+).

Its function is as follows. Involved in cuticle function and is essential for normal morphological development. In Caenorhabditis briggsae, this protein is Protein dumpy-20 (dpy-20).